The sequence spans 143 residues: Fluoride-specific ion channel FluC (143 aa).

4 helical membrane passes run 6–26, 38–58, 70–90, and 103–123; these read CILVMIGGALGTLARYVVSVL, TILINVTGSFIIGLFGTLTLA, LFVMIGLCGGYTTFSSFSLQT, and MVNVCASVVLCVLAVALGHVV. Residues glycine 78 and threonine 81 each contribute to the Na(+) site.

It belongs to the fluoride channel Fluc/FEX (TC 1.A.43) family.

The protein localises to the cell inner membrane. The enzyme catalyses fluoride(in) = fluoride(out). Its activity is regulated as follows. Na(+) is not transported, but it plays an essential structural role and its presence is essential for fluoride channel function. In terms of biological role, fluoride-specific ion channel. Important for reducing fluoride concentration in the cell, thus reducing its toxicity. The sequence is that of Fluoride-specific ion channel FluC from Methylobacterium radiotolerans (strain ATCC 27329 / DSM 1819 / JCM 2831 / NBRC 15690 / NCIMB 10815 / 0-1).